The following is a 398-amino-acid chain: Protein trichome birefringence-like 45 (398 aa).

A helical; Signal-anchor for type II membrane protein membrane pass occupies residues 1-21 (MAAVQCLTFLFLFLLQNATSA). Positions 131-133 (GDS) match the GDS motif motif. The DCXHWCLPGXXDXWN motif signature appears at 375-389 (DCSHWCLPGLPDTWN).

The protein belongs to the PC-esterase family. TBL subfamily.

It localises to the membrane. Its function is as follows. May act as a bridging protein that binds pectin and other cell wall polysaccharides. Probably involved in maintaining esterification of pectins. May be involved in the specific O-acetylation of cell wall polymers. This is Protein trichome birefringence-like 45 (TBL45) from Arabidopsis thaliana (Mouse-ear cress).